The chain runs to 137 residues: Small ribosomal subunit protein uS12 (137 aa).

The disordered stretch occupies residues 1–43 (MPTINQLVRKGRVSKTKKSDSPALNKGYNSFKKRMTDQNAPQK).

It belongs to the universal ribosomal protein uS12 family. In terms of assembly, part of the 30S ribosomal subunit. Contacts proteins S8 and S17. May interact with IF1 in the 30S initiation complex.

Functionally, with S4 and S5 plays an important role in translational accuracy. In terms of biological role, interacts with and stabilizes bases of the 16S rRNA that are involved in tRNA selection in the A site and with the mRNA backbone. Located at the interface of the 30S and 50S subunits, it traverses the body of the 30S subunit contacting proteins on the other side and probably holding the rRNA structure together. The combined cluster of proteins S8, S12 and S17 appears to hold together the shoulder and platform of the 30S subunit. The sequence is that of Small ribosomal subunit protein uS12 from Oceanobacillus iheyensis (strain DSM 14371 / CIP 107618 / JCM 11309 / KCTC 3954 / HTE831).